The primary structure comprises 194 residues: ATP synthase subunit delta (194 aa).

This sequence belongs to the ATPase delta chain family. In terms of assembly, F-type ATPases have 2 components, F(1) - the catalytic core - and F(0) - the membrane proton channel. F(1) has five subunits: alpha(3), beta(3), gamma(1), delta(1), epsilon(1). F(0) has three main subunits: a(1), b(2) and c(10-14). The alpha and beta chains form an alternating ring which encloses part of the gamma chain. F(1) is attached to F(0) by a central stalk formed by the gamma and epsilon chains, while a peripheral stalk is formed by the delta and b chains.

It is found in the cell inner membrane. In terms of biological role, f(1)F(0) ATP synthase produces ATP from ADP in the presence of a proton or sodium gradient. F-type ATPases consist of two structural domains, F(1) containing the extramembraneous catalytic core and F(0) containing the membrane proton channel, linked together by a central stalk and a peripheral stalk. During catalysis, ATP synthesis in the catalytic domain of F(1) is coupled via a rotary mechanism of the central stalk subunits to proton translocation. Its function is as follows. This protein is part of the stalk that links CF(0) to CF(1). It either transmits conformational changes from CF(0) to CF(1) or is implicated in proton conduction. The protein is ATP synthase subunit delta of Bartonella quintana (strain Toulouse) (Rochalimaea quintana).